The chain runs to 329 residues: Putative L-ascorbate peroxidase 6 (329 aa).

His123 acts as the Proton acceptor in catalysis. His244 serves as a coordination point for heme b.

This sequence belongs to the peroxidase family. Ascorbate peroxidase subfamily. The cofactor is heme b.

The catalysed reaction is L-ascorbate + H2O2 = L-dehydroascorbate + 2 H2O. Functionally, plays a key role in hydrogen peroxide removal. This chain is Putative L-ascorbate peroxidase 6 (APX6), found in Arabidopsis thaliana (Mouse-ear cress).